The sequence spans 198 residues: MNRQGVRLLPDRGGSLAAFGVGLAVVIILLGMGRPPICPCGVVRLWHGVVESAENSQQVSDWYSFSHLIHGFLFYGAAHIVWRRFGFAELSPRWALALAVLIEGSWEILENSPIIIDRYRSVTISWGYSGDSVLNSAADIGFMAAGFLFAARAPVLVTVVLGIGFELFTLWAIRDNLALNILMLVWPVEAVRVWQGGG.

Transmembrane regions (helical) follow at residues 13-33 (GGSL…LGMG), 62-82 (WYSF…HIVW), 96-116 (LALA…PIII), 153-173 (APVL…LWAI), and 177-197 (LALN…WQGG).

It belongs to the UPF0314 family.

It localises to the cell membrane. The protein is UPF0314 protein Saro_1818 of Novosphingobium aromaticivorans (strain ATCC 700278 / DSM 12444 / CCUG 56034 / CIP 105152 / NBRC 16084 / F199).